A 662-amino-acid polypeptide reads, in one-letter code: High affinity sulfate transporter 2 (662 aa).

The interval 1 to 35 is disordered; sequence MSQRVSDQAMAEVIAETRTNSSSRRHGGGDDTPSL. Transmembrane regions (helical) follow at residues 103 to 123, 128 to 148, 153 to 173, 182 to 202, 205 to 225, 264 to 284, 291 to 311, 346 to 366, 383 to 403, 420 to 440, 447 to 467, and 481 to 501; these read GDFI…LAYA, LDPW…AFMG, IAIG…SNEI, LRLA…LGVC, GFLI…GAAI, WETI…KYIA, FWVS…FVYI, AGVR…MAIG, MVAM…VTTG, VSNI…TPLF, VLAS…AMVL, and GAFF…AVAI. Residues 532–655 enclose the STAS domain; the sequence is QYPKAEQIPG…LTVADAVATY (124 aa).

This sequence belongs to the SLC26A/SulP transporter (TC 2.A.53) family.

It localises to the membrane. High-affinity H(+)/sulfate cotransporter that mediates the uptake of sulfate by plant roots from low concentrations of sulfate in the soil solution. This Stylosanthes hamata (Caribbean stylo) protein is High affinity sulfate transporter 2 (ST2).